Reading from the N-terminus, the 88-residue chain is Acyl-CoA-binding domain-containing protein 7 (88 aa).

Residues 3-88 (LQADFDRAAE…AKELIEKYGI (86 aa)) enclose the ACB domain. An acyl-CoA-binding positions include Arg15, 30 to 34 (YGLYK), Lys56, and Tyr75.

It belongs to the ACBD7 family.

In terms of biological role, binds medium- and long-chain acyl-CoA esters. This chain is Acyl-CoA-binding domain-containing protein 7 (ACBD7), found in Homo sapiens (Human).